A 433-amino-acid chain; its full sequence is Glycerol-3-phosphate dehydrogenase [NAD(+)] (433 aa).

NAD(+) contacts are provided by residues 17 to 22, F49, and F117; that span reads GSGNWG. Residue K140 coordinates substrate. Position 173 (A173) interacts with NAD(+). The tract at residues 187–246 is disordered; the sequence is IAYDPPPIDSSRAATPRDRSPNYDSTSANKLPDLTVTSADSNGKDDRGRRTKAKLTPVPE. Polar residues predominate over residues 208–227; sequence NYDSTSANKLPDLTVTSADS. K283 serves as the catalytic Proton acceptor. Positions 349 and 378 each coordinate NAD(+). Substrate is bound at residue 349–350; that stretch reads RN.

Belongs to the NAD-dependent glycerol-3-phosphate dehydrogenase family.

The catalysed reaction is sn-glycerol 3-phosphate + NAD(+) = dihydroxyacetone phosphate + NADH + H(+). The sequence is that of Glycerol-3-phosphate dehydrogenase [NAD(+)] from Pyricularia oryzae (strain Y34) (Rice blast fungus).